A 222-amino-acid chain; its full sequence is Glutathione S-transferase A5 (222 aa).

N-acetylalanine is present on A2. Positions 3–83 constitute a GST N-terminal domain; the sequence is EKPKLHYSNA…YIASKYNLYG (81 aa). N6-succinyllysine is present on K4. Residues Y9, R45, 54–55, and 67–68 contribute to the glutathione site; these read QV and QT. The 124-residue stretch at 85–208 folds into the GST C-terminal domain; the sequence is DMKERALIDM…QPGSQRKPPM (124 aa).

Belongs to the GST superfamily. Alpha family. As to quaternary structure, homodimer. Expression not detected.

It is found in the cytoplasm. It carries out the reaction RX + glutathione = an S-substituted glutathione + a halide anion + H(+). The chain is Glutathione S-transferase A5 (GSTA5) from Homo sapiens (Human).